The following is a 133-amino-acid chain: Small ribosomal subunit protein uS11 (133 aa).

This sequence belongs to the universal ribosomal protein uS11 family. As to quaternary structure, part of the 30S ribosomal subunit. Interacts with proteins S7 and S18. Binds to IF-3.

In terms of biological role, located on the platform of the 30S subunit, it bridges several disparate RNA helices of the 16S rRNA. Forms part of the Shine-Dalgarno cleft in the 70S ribosome. The chain is Small ribosomal subunit protein uS11 from Chlamydia pneumoniae (Chlamydophila pneumoniae).